The primary structure comprises 144 residues: ATP synthase subunit 9, mitochondrial (144 aa).

The transit peptide at 1 to 63 (MASTRVLASR…ATRQITQKRA (63 aa)) directs the protein to the mitochondrion. 2 consecutive transmembrane segments (helical) span residues 83–103 (TAAIGLTGAGIGIGLVFAALL) and 120–140 (AILGFAFVEAIGLFDLMVALM).

Belongs to the ATPase C chain family. F-type ATPases have 2 components, CF(1) - the catalytic core - and CF(0) - the membrane proton channel. CF(1) has five subunits: alpha(3), beta(3), gamma(1), delta(1), epsilon(1). CF(0) has three main subunits: a, b and c.

The protein localises to the mitochondrion membrane. Its function is as follows. Mitochondrial membrane ATP synthase (F(1)F(0) ATP synthase or Complex V) produces ATP from ADP in the presence of a proton gradient across the membrane which is generated by electron transport complexes of the respiratory chain. F-type ATPases consist of two structural domains, F(1) - containing the extramembraneous catalytic core and F(0) - containing the membrane proton channel, linked together by a central stalk and a peripheral stalk. During catalysis, ATP synthesis in the catalytic domain of F(1) is coupled via a rotary mechanism of the central stalk subunits to proton translocation. Part of the complex F(0) domain. A homomeric c-ring of probably 10 subunits is part of the complex rotary element. This chain is ATP synthase subunit 9, mitochondrial (ATP9), found in Podospora anserina (Pleurage anserina).